The chain runs to 1117 residues: MADGPRCKRRKQANPRRNNVTNYNTVVEANSDSDDEDKLHIVEEESITDAADCEGGMPDDELPADQTVLPGGSDRGGGAKNCWQDNVKDNECDSDAENEQNHDPNVEEFLQQQDTAVIYPEAPEEDQRQGTPEASSHDENGTPDAFSQLLTCPYCDRGYKRFTSLKEHIKYRHEKNEDNFSCSLCSYTFAYRTQLERHMTSHKSGREQRHVTQSGGNRKFKCTECGKAFKYKHHLKEHLRIHSGEKPYECPNCKKRFSHSGSYSSHISSKKCISLMPVNGRPRSGLKTSQCSSPSLSTSPGSPTRPQIRQKIENKPLQEPLSVNQIKTEPVDYEFKPIVVASGINCSTPLQNGVFSSGGQLQATSSPQGVVQAVVLPTVGLVSPISINLSDIQNVLKVAVDGNVIRQVLETNQASLASKEQEAVSASPIQQGGHSVISAISLPLVDQDGTTKIIINYSLEQPSQLQVVPQNLKKEIPAPTNSCKSEKLPEDLTVKSETDKSFEGARDDSTCLLCEDCPGDLNALPELKHYDPECPAQPPPPAPATEKPESSASSAGNGDLSPSQPPLKNLLSLLKAYYALNAQPSTEELSKIADSVNLPLDGVKKWFEKMQAGQIPGQSPDPPSPGTGSVNIPTKTDEQPQPADGNEPQEDSTRGQSPVKIRSSPVLPVGSAMNGSRSCTSSPSPLNLCSARNPQGYSCVAEGAQEEPQVEPLDLSLPKQQGELLERSTVSSVYQNSVYSVQEEPLNLSCAKKEPQKDSCVTDSEPVVNVVPPSANPINIAIPTVTAQLPTIVAIADQNSVPCLRALAANKQTILIPQVAYTYSATVSPAVQEPPVKVIQPNGNQDERQDTSSEGVSTVEDQNDSDSTPPKKKTRKTENGMYACDLCDKIFQKSSSLLRHKYEHTGKRPHECGICRKAFKHKHHLIEHMRLHSGEKPYQCDKCGKRFSHSGSYSQHMNHRYSYCKRGAEDRDAMEQEDAGPEVLPEVLATEHVGARASPSQADSDERESLTREEDEDSEKEEEEEDKEMEELQEGKECENPQGEEEEEEEEEEEEEEEEEEEVEADEAEHEAAAKTDGTVEVGAAQQAGSLEQKASESEMESESESEQLSEEKTNEA.

2 disordered regions span residues 1-103 (MADG…QNHD) and 122-143 (APEE…NGTP). Residues 15 to 30 (PRRNNVTNYNTVVEAN) show a composition bias toward low complexity. Phosphoserine occurs at positions 31 and 33. A C2H2-type 1 zinc finger spans residues 150 to 173 (LTCPYCDRGYKRFTSLKEHIKYRH). Residues Lys-166 and Lys-175 each participate in a glycyl lysine isopeptide (Lys-Gly) (interchain with G-Cter in SUMO2) cross-link. C2H2-type zinc fingers lie at residues 180 to 202 (FSCS…MTSH) and 220 to 242 (FKCT…LRIH). The C2H2-type 4; atypical zinc finger occupies 248–272 (YECPNCKKRFSHSGSYSSHISSKKC). A disordered region spans residues 278–307 (VNGRPRSGLKTSQCSSPSLSTSPGSPTRPQ). Lys-287 is covalently cross-linked (Glycyl lysine isopeptide (Lys-Gly) (interchain with G-Cter in SUMO2)). The span at 288 to 304 (TSQCSSPSLSTSPGSPT) shows a compositional bias: low complexity. Phosphoserine occurs at positions 293 and 302. Glycyl lysine isopeptide (Lys-Gly) (interchain with G-Cter in SUMO2) cross-links involve residues Lys-311 and Lys-315. A Glycyl lysine isopeptide (Lys-Gly) (interchain with G-Cter in SUMO); alternate cross-link involves residue Lys-327. Lys-327 participates in a covalent cross-link: Glycyl lysine isopeptide (Lys-Gly) (interchain with G-Cter in SUMO2); alternate. Glycyl lysine isopeptide (Lys-Gly) (interchain with G-Cter in SUMO2) cross-links involve residues Lys-419, Lys-473, Lys-484, Lys-495, and Lys-528. Disordered regions lie at residues 476-501 (IPAP…TDKS), 528-566 (KHYD…SQPP), and 613-687 (GQIP…SPLN). Residues 484–501 (KSEKLPEDLTVKSETDKS) are compositionally biased toward basic and acidic residues. Residues 559-618 (DLSPSQPPLKNLLSLLKAYYALNAQPSTEELSKIADSVNLPLDGVKKWFEKMQAGQIPGQ) constitute a DNA-binding region (homeobox; atypical). Phosphoserine is present on residues Ser-657, Ser-664, Ser-671, and Ser-678. The segment covering 673–687 (MNGSRSCTSSPSPLN) has biased composition (polar residues). Phosphothreonine is present on Thr-680. Phosphoserine is present on Ser-682. Lys-752 is covalently cross-linked (Glycyl lysine isopeptide (Lys-Gly) (interchain with G-Cter in SUMO); alternate). Lys-752 participates in a covalent cross-link: Glycyl lysine isopeptide (Lys-Gly) (interchain with G-Cter in SUMO2); alternate. Residues 834–876 (PPVKVIQPNGNQDERQDTSSEGVSTVEDQNDSDSTPPKKKTRK) form a disordered region. A compositionally biased stretch (polar residues) spans 852-868 (SSEGVSTVEDQNDSDST). 2 C2H2-type zinc fingers span residues 882–904 (YACD…KYEH) and 910–932 (HECG…MRLH). A C2H2-type 7; atypical zinc finger spans residues 938–959 (YQCDKCGKRFSHSGSYSQHMNH). The tract at residues 991 to 1117 (EHVGARASPS…QLSEEKTNEA (127 aa)) is disordered. 3 stretches are compositionally biased toward acidic residues: residues 1013-1032 (EEDE…MEEL), 1042-1069 (QGEE…DEAE), and 1098-1109 (SEMESESESEQL).

It belongs to the delta-EF1/ZFH-1 C2H2-type zinc-finger family. Interacts (via N-terminus) with SMARCA4/BRG1. In terms of processing, ubiquitinated, leading to degradation in a proteasome-dependent manner. Deubiquitinated by USP51, leading to stabilization. Expressed in the external germinal layer (EGL) and internal granular layer (IGL) of the cerebellum (at protein level).

It is found in the nucleus. Acts as a transcriptional repressor. Binds to E-box sequences in the immunoglobulin heavy chain enhancer as well as in the regulatory regions of many other tissue-specific genes. Represses E-cadherin promoter and induces an epithelial-mesenchymal transition (EMT) by recruiting SMARCA4/BRG1. Represses BCL6 transcription in the presence of the corepressor CTBP1. Positively regulates neuronal differentiation. Represses RCOR1 transcription activation during neurogenesis. Represses transcription by binding to the E box (5'-CANNTG-3'). In the absence of TGFB1, acts as a repressor of COL1A2 transcription via binding to the E-box in the upstream enhancer region. Promotes tumorigenicity by repressing stemness-inhibiting microRNAs. The sequence is that of Zinc finger E-box-binding homeobox 1 from Mus musculus (Mouse).